We begin with the raw amino-acid sequence, 163 residues long: E3 ubiquitin-protein ligase ATL23 (163 aa).

Residues A35–W55 traverse the membrane as a helical segment. The RING-type; atypical zinc-finger motif lies at C104–R146.

This sequence belongs to the RING-type zinc finger family. ATL subfamily.

Its subcellular location is the membrane. The enzyme catalyses S-ubiquitinyl-[E2 ubiquitin-conjugating enzyme]-L-cysteine + [acceptor protein]-L-lysine = [E2 ubiquitin-conjugating enzyme]-L-cysteine + N(6)-ubiquitinyl-[acceptor protein]-L-lysine.. It functions in the pathway protein modification; protein ubiquitination. Functionally, E3 ubiquitin-protein ligase able to catalyze polyubiquitination with ubiquitin-conjugating enzyme E2 UBC8, UBC10, UBC11, UBC28 and UBC29 in vitro. In Arabidopsis thaliana (Mouse-ear cress), this protein is E3 ubiquitin-protein ligase ATL23 (ATL23).